The primary structure comprises 222 residues: Adenylate kinase (222 aa).

Residue 10-15 coordinates ATP; sequence GAGKGT. The interval 30-59 is NMP; sequence STGDMLRAAVKAGTPLGIEAKKVMDAGGLV. Residues Thr-31, Arg-36, 57–59, 85–88, and Gln-92 each bind AMP; these read GLV and GFPR. Residues 122–159 form an LID region; the sequence is GRRVHVASGRTYHVKYNPPKNEGQDDETGDPLIQRDDD. ATP-binding positions include Arg-123 and 132–133; that span reads TY. The segment at 135–162 is disordered; sequence VKYNPPKNEGQDDETGDPLIQRDDDKEE. 2 residues coordinate AMP: Arg-156 and Arg-167. Gly-207 is a binding site for ATP.

This sequence belongs to the adenylate kinase family. Monomer.

It is found in the cytoplasm. The enzyme catalyses AMP + ATP = 2 ADP. It functions in the pathway purine metabolism; AMP biosynthesis via salvage pathway; AMP from ADP: step 1/1. Its function is as follows. Catalyzes the reversible transfer of the terminal phosphate group between ATP and AMP. Plays an important role in cellular energy homeostasis and in adenine nucleotide metabolism. This is Adenylate kinase from Ralstonia nicotianae (strain ATCC BAA-1114 / GMI1000) (Ralstonia solanacearum).